The primary structure comprises 715 residues: Phosphoribosylformylglycinamidine synthase subunit PurL (715 aa).

H33 is an active-site residue. Y36 contacts ATP. E77 is a Mg(2+) binding site. Residues 78 to 81 and R100 each bind substrate; that span reads SHNH. H79 acts as the Proton acceptor in catalysis. Residue D101 coordinates Mg(2+). Q225 contributes to the substrate binding site. D253 provides a ligand contact to Mg(2+). Substrate is bound at residue 297–299; the sequence is ESQ. ATP is bound by residues N476 and G513. N514 serves as a coordination point for Mg(2+). Residue S516 coordinates substrate.

Belongs to the FGAMS family. Monomer. Part of the FGAM synthase complex composed of 1 PurL, 1 PurQ and 2 PurS subunits.

The protein localises to the cytoplasm. The catalysed reaction is N(2)-formyl-N(1)-(5-phospho-beta-D-ribosyl)glycinamide + L-glutamine + ATP + H2O = 2-formamido-N(1)-(5-O-phospho-beta-D-ribosyl)acetamidine + L-glutamate + ADP + phosphate + H(+). The protein operates within purine metabolism; IMP biosynthesis via de novo pathway; 5-amino-1-(5-phospho-D-ribosyl)imidazole from N(2)-formyl-N(1)-(5-phospho-D-ribosyl)glycinamide: step 1/2. Part of the phosphoribosylformylglycinamidine synthase complex involved in the purines biosynthetic pathway. Catalyzes the ATP-dependent conversion of formylglycinamide ribonucleotide (FGAR) and glutamine to yield formylglycinamidine ribonucleotide (FGAM) and glutamate. The FGAM synthase complex is composed of three subunits. PurQ produces an ammonia molecule by converting glutamine to glutamate. PurL transfers the ammonia molecule to FGAR to form FGAM in an ATP-dependent manner. PurS interacts with PurQ and PurL and is thought to assist in the transfer of the ammonia molecule from PurQ to PurL. In Methanosarcina barkeri (strain Fusaro / DSM 804), this protein is Phosphoribosylformylglycinamidine synthase subunit PurL.